Here is a 281-residue protein sequence, read N- to C-terminus: Putative zinc-binding protein ORF11 (281 aa).

This Ictaluridae (bullhead catfishes) protein is Putative zinc-binding protein ORF11 (ORF11).